The chain runs to 342 residues: 4-amino-5-hydroxymethyl-2-methylpyrimidine phosphate synthase (342 aa).

N6-(pyridoxal phosphate)lysine is present on Lys-62. The active site involves His-66. Residue 115–118 coordinates pyridoxal 5'-phosphate; that stretch reads GEFG. Residues 195 to 199 carry the CCCFC; essential for catalytic activity, may be the site of iron coordination motif; it reads CCCFC.

Belongs to the NMT1/THI5 family. As to quaternary structure, homodimer. The cofactor is Fe cation.

It catalyses the reaction N(6)-(pyridoxal phosphate)-L-lysyl-[4-amino-5-hydroxymethyl-2-methylpyrimidine phosphate synthase] + L-histidyl-[4-amino-5-hydroxymethyl-2-methylpyrimidine phosphate synthase] + 2 Fe(3+) + 4 H2O = L-lysyl-[4-amino-5-hydroxymethyl-2-methylpyrimidine phosphate synthase] + (2S)-2-amino-5-hydroxy-4-oxopentanoyl-[4-amino-5-hydroxymethyl-2-methylpyrimidine phosphate synthase] + 4-amino-2-methyl-5-(phosphooxymethyl)pyrimidine + 3-oxopropanoate + 2 Fe(2+) + 2 H(+). It participates in cofactor biosynthesis; thiamine diphosphate biosynthesis. In terms of biological role, responsible for the formation of the pyrimidine heterocycle in the thiamine biosynthesis pathway. Catalyzes the formation of hydroxymethylpyrimidine phosphate (HMP-P) from histidine and pyridoxal phosphate (PLP). The protein uses PLP and the active site histidine to form HMP-P, generating an inactive enzyme. The enzyme can only undergo a single turnover, which suggests it is a suicide enzyme. The polypeptide is 4-amino-5-hydroxymethyl-2-methylpyrimidine phosphate synthase (Aspergillus parasiticus).